The following is an 87-amino-acid chain: Large ribosomal subunit protein bL27 (87 aa).

The protein belongs to the bacterial ribosomal protein bL27 family.

The sequence is that of Large ribosomal subunit protein bL27 from Dechloromonas aromatica (strain RCB).